A 107-amino-acid polypeptide reads, in one-letter code: Putative double-stranded DNA mimic protein YE2228 (107 aa).

Belongs to the putative dsDNA mimic protein family.

In terms of biological role, may act as a double-stranded DNA (dsDNA) mimic. Probably regulates the activity of a dsDNA-binding protein. The sequence is that of Putative double-stranded DNA mimic protein YE2228 from Yersinia enterocolitica serotype O:8 / biotype 1B (strain NCTC 13174 / 8081).